The primary structure comprises 193 residues: Protein SINE3 (193 aa).

A disordered region spans residues 15 to 35; that stretch reads SELGAKRLKDPEMKNRKVTTE. The span at 18–35 shows a compositional bias: basic and acidic residues; that stretch reads GAKRLKDPEMKNRKVTTE. The KASH domain occupies 155-193; the sequence is VTVKFRIVLLSFILWAILAAIVVFFSSGEERAYRGPLPT. A helical transmembrane segment spans residues 161 to 181; it reads IVLLSFILWAILAAIVVFFSS. The Required for nuclear localization motif lies at 190 to 193; the sequence is PLPT.

As to quaternary structure, interacts with SUN1 and SUN2.

Its subcellular location is the nucleus membrane. The protein is Protein SINE3 of Arabidopsis thaliana (Mouse-ear cress).